The following is a 921-amino-acid chain: Isoleucine--tRNA ligase (921 aa).

The short motif at 57–67 (PYANGDIHMGH) is the 'HIGH' region element. Glu552 provides a ligand contact to L-isoleucyl-5'-AMP. The 'KMSKS' region signature appears at 593 to 597 (KMSKS). Residue Lys596 participates in ATP binding. Positions 888, 891, 908, and 911 each coordinate Zn(2+).

It belongs to the class-I aminoacyl-tRNA synthetase family. IleS type 1 subfamily. Monomer. Requires Zn(2+) as cofactor.

It is found in the cytoplasm. The catalysed reaction is tRNA(Ile) + L-isoleucine + ATP = L-isoleucyl-tRNA(Ile) + AMP + diphosphate. Functionally, catalyzes the attachment of isoleucine to tRNA(Ile). As IleRS can inadvertently accommodate and process structurally similar amino acids such as valine, to avoid such errors it has two additional distinct tRNA(Ile)-dependent editing activities. One activity is designated as 'pretransfer' editing and involves the hydrolysis of activated Val-AMP. The other activity is designated 'posttransfer' editing and involves deacylation of mischarged Val-tRNA(Ile). The chain is Isoleucine--tRNA ligase from Bacillus cereus (strain B4264).